A 366-amino-acid polypeptide reads, in one-letter code: Holliday junction branch migration complex subunit RuvB (366 aa).

Residues Met-1–Ile-49 are disordered. A large ATPase domain (RuvB-L) region spans residues Pro-13–Tyr-210. ATP is bound by residues Ile-49, Arg-50, Gly-91, Lys-94, Thr-95, Thr-96, Glu-157–Tyr-159, Arg-200, Tyr-210, and Arg-247. Thr-95 provides a ligand contact to Mg(2+). Residues Glu-211–Gln-281 are small ATPAse domain (RuvB-S). The segment at Pro-284–Leu-366 is head domain (RuvB-H). Residues Arg-339 and Arg-344 each coordinate DNA.

Belongs to the RuvB family. As to quaternary structure, homohexamer. Forms an RuvA(8)-RuvB(12)-Holliday junction (HJ) complex. HJ DNA is sandwiched between 2 RuvA tetramers; dsDNA enters through RuvA and exits via RuvB. An RuvB hexamer assembles on each DNA strand where it exits the tetramer. Each RuvB hexamer is contacted by two RuvA subunits (via domain III) on 2 adjacent RuvB subunits; this complex drives branch migration. In the full resolvosome a probable DNA-RuvA(4)-RuvB(12)-RuvC(2) complex forms which resolves the HJ.

Its subcellular location is the cytoplasm. The catalysed reaction is ATP + H2O = ADP + phosphate + H(+). In terms of biological role, the RuvA-RuvB-RuvC complex processes Holliday junction (HJ) DNA during genetic recombination and DNA repair, while the RuvA-RuvB complex plays an important role in the rescue of blocked DNA replication forks via replication fork reversal (RFR). RuvA specifically binds to HJ cruciform DNA, conferring on it an open structure. The RuvB hexamer acts as an ATP-dependent pump, pulling dsDNA into and through the RuvAB complex. RuvB forms 2 homohexamers on either side of HJ DNA bound by 1 or 2 RuvA tetramers; 4 subunits per hexamer contact DNA at a time. Coordinated motions by a converter formed by DNA-disengaged RuvB subunits stimulates ATP hydrolysis and nucleotide exchange. Immobilization of the converter enables RuvB to convert the ATP-contained energy into a lever motion, pulling 2 nucleotides of DNA out of the RuvA tetramer per ATP hydrolyzed, thus driving DNA branch migration. The RuvB motors rotate together with the DNA substrate, which together with the progressing nucleotide cycle form the mechanistic basis for DNA recombination by continuous HJ branch migration. Branch migration allows RuvC to scan DNA until it finds its consensus sequence, where it cleaves and resolves cruciform DNA. The chain is Holliday junction branch migration complex subunit RuvB from Nostoc sp. (strain PCC 7120 / SAG 25.82 / UTEX 2576).